We begin with the raw amino-acid sequence, 543 residues long: Acrosin-binding protein (543 aa).

A signal peptide spans 1–25 (MRKPAAGFLPSLLKVLLLPLAPAAA). The segment at 26-106 (QDSTQASTPG…ASWFESFCQF (81 aa)) is pro-ACR binding. A propeptide spans 26-273 (QDSTQASTPG…NPSSFAPRVR (248 aa)) (removed in mature form). The segment at 185 to 272 (SLGGQEQAPE…SNPSSFAPRV (88 aa)) is disordered. Positions 192-220 (APEHKQEQGVEHRQEPTQEHKQEEGQKQE) are enriched in basic and acidic residues. Over residues 221–231 (EQEEEQEEEGK) the composition is skewed to acidic residues. Positions 232–243 (QEEGQGTKEGRE) are enriched in basic and acidic residues. The interval 319–427 (LPHTEALLVL…NQVGSPESGR (109 aa)) is pro-ACR binding.

As to quaternary structure, binds proacrosin (pro-ACR). Does not bind the mature form of ACR. Post-translationally, phosphorylated on Tyr residues in capacitated sperm. In terms of processing, the N-terminus is blocked. Synthesized as a 60-kDa precursor, the 32-kDa mature form is post-translationally produced by the removal of the N-terminal half of the precursor during sperm maturation in the testis and/or epididymis. Expression restricted to testis in normal tissue. Expressed in a wide spectrum of cancers, including bladder, breast, liver, lung and colon cancers.

The protein localises to the secreted. It is found in the cytoplasmic vesicle. Its subcellular location is the secretory vesicle. It localises to the acrosome. Acrosomal protein that maintains proacrosin (pro-ACR) as an enzymatically inactive zymogen in the acrosome. Involved also in the acrosome formation. The protein is Acrosin-binding protein of Homo sapiens (Human).